An 865-amino-acid polypeptide reads, in one-letter code: Protein translocase subunit SecA (865 aa).

ATP is bound by residues Q85, G103 to T107, and D505. Residues C847, C849, C858, and H859 each coordinate Zn(2+).

This sequence belongs to the SecA family. In terms of assembly, monomer and homodimer. Part of the essential Sec protein translocation apparatus which comprises SecA, SecYEG and auxiliary proteins SecDF. Other proteins may also be involved. Zn(2+) serves as cofactor.

Its subcellular location is the cell membrane. It is found in the cytoplasm. It carries out the reaction ATP + H2O + cellular proteinSide 1 = ADP + phosphate + cellular proteinSide 2.. Part of the Sec protein translocase complex. Interacts with the SecYEG preprotein conducting channel. Has a central role in coupling the hydrolysis of ATP to the transfer of proteins into and across the cell membrane, serving as an ATP-driven molecular motor driving the stepwise translocation of polypeptide chains across the membrane. In Lactococcus lactis subsp. lactis (strain IL1403) (Streptococcus lactis), this protein is Protein translocase subunit SecA.